Here is a 452-residue protein sequence, read N- to C-terminus: Na(+)/H(+) antiporter NhaA (452 aa).

11 consecutive transmembrane segments (helical) span residues F27–I47, L78–I98, I114–F134, I141–L161, I172–F192, G201–A221, S222–I242, P316–A336, F346–A366, I388–L408, and I421–Y441.

Belongs to the NhaA Na(+)/H(+) (TC 2.A.33) antiporter family.

The protein resides in the cell inner membrane. The enzyme catalyses Na(+)(in) + 2 H(+)(out) = Na(+)(out) + 2 H(+)(in). Functionally, na(+)/H(+) antiporter that extrudes sodium in exchange for external protons. The sequence is that of Na(+)/H(+) antiporter NhaA from Bartonella bacilliformis (strain ATCC 35685 / KC583 / Herrer 020/F12,63).